Consider the following 606-residue polypeptide: (R)-limonene synthase 1, chloroplastic (606 aa).

Residues 1–32 constitute a chloroplast transit peptide; that stretch reads MSSCINPSTLVTSVNAFKCLPLATNKAAIRIM. Asp-342 and Asp-346 together coordinate Mn(2+). 5 residues coordinate substrate: Asp-342, Asp-346, Arg-484, Asp-487, and Lys-503. A DDXXD motif motif is present at residues 342-346; the sequence is DDIYD. Position 487 (Asp-487) interacts with Mn(2+).

It belongs to the terpene synthase family. The cofactor is Mg(2+). It depends on Mn(2+) as a cofactor.

The protein localises to the plastid. It localises to the chloroplast. The catalysed reaction is (2E)-geranyl diphosphate = (4R)-limonene + diphosphate. In Citrus limon (Lemon), this protein is (R)-limonene synthase 1, chloroplastic.